We begin with the raw amino-acid sequence, 492 residues long: uncharacterized protein (492 aa).

An N-terminal signal peptide occupies residues 1–22 (MIRPNMFALLMLVVLAITSVNA). N-linked (GlcNAc...) asparagine; by host glycans are attached at residues Asn92, Asn97, Asn119, Asn146, Asn213, Asn267, and Asn458.

The protein resides in the secreted. This is an uncharacterized protein from Acanthamoeba polyphaga (Amoeba).